Here is a 119-residue protein sequence, read N- to C-terminus: Basic phospholipase A2 DE-1 (119 aa).

7 cysteine pairs are disulfide-bonded: Cys-11–Cys-71, Cys-26–Cys-118, Cys-28–Cys-44, Cys-43–Cys-99, Cys-50–Cys-92, Cys-60–Cys-85, and Cys-78–Cys-90. Positions 27, 29, 31, and 48 each coordinate Ca(2+). Asp-93 is a catalytic residue.

The protein belongs to the phospholipase A2 family. Group I subfamily. D49 sub-subfamily. It depends on Ca(2+) as a cofactor. Expressed by the venom gland.

The protein resides in the secreted. The enzyme catalyses a 1,2-diacyl-sn-glycero-3-phosphocholine + H2O = a 1-acyl-sn-glycero-3-phosphocholine + a fatty acid + H(+). PLA2 catalyzes the calcium-dependent hydrolysis of the 2-acyl groups in 3-sn-phosphoglycerides. The chain is Basic phospholipase A2 DE-1 from Hemachatus haemachatus (Rinkhals).